We begin with the raw amino-acid sequence, 433 residues long: Enolase (433 aa).

(2R)-2-phosphoglycerate is bound at residue glutamine 167. Glutamate 209 serves as the catalytic Proton donor. Residues aspartate 246, glutamate 291, and aspartate 318 each coordinate Mg(2+). 4 residues coordinate (2R)-2-phosphoglycerate: lysine 343, arginine 372, serine 373, and lysine 394. Catalysis depends on lysine 343, which acts as the Proton acceptor.

The protein belongs to the enolase family. As to quaternary structure, component of the RNA degradosome, a multiprotein complex involved in RNA processing and mRNA degradation. Mg(2+) serves as cofactor.

The protein localises to the cytoplasm. It localises to the secreted. It is found in the cell surface. It carries out the reaction (2R)-2-phosphoglycerate = phosphoenolpyruvate + H2O. The protein operates within carbohydrate degradation; glycolysis; pyruvate from D-glyceraldehyde 3-phosphate: step 4/5. Functionally, catalyzes the reversible conversion of 2-phosphoglycerate (2-PG) into phosphoenolpyruvate (PEP). It is essential for the degradation of carbohydrates via glycolysis. This Haemophilus ducreyi (strain 35000HP / ATCC 700724) protein is Enolase.